Consider the following 302-residue polypeptide: Cyclin-dependent kinase 1-B (302 aa).

The 284-residue stretch at 4-287 (YTKIEKIGEG…ARKAMLHPYF (284 aa)) folds into the Protein kinase domain. Residues 10–18 (IGEGTYGVV) and Lys33 contribute to the ATP site. A Phosphothreonine modification is found at Thr14. Tyr15 bears the Phosphotyrosine; by wee1 and wee2 mark. Residue Asp128 is the Proton acceptor of the active site. Residue Thr161 is modified to Phosphothreonine; by cak. Ser277 carries the post-translational modification Phosphoserine.

The protein belongs to the protein kinase superfamily. CMGC Ser/Thr protein kinase family. CDC2/CDKX subfamily. As to quaternary structure, forms a stable but non-covalent complex with a regulatory subunit and with a cyclin. Interacts with spdya. Phosphorylation at Tyr-15 by wee1 and wee2 inhibits the protein kinase activity and acts negative regulator of entry into mitosis (G2 to M transition).

Its subcellular location is the nucleus. It carries out the reaction L-seryl-[protein] + ATP = O-phospho-L-seryl-[protein] + ADP + H(+). It catalyses the reaction L-threonyl-[protein] + ATP = O-phospho-L-threonyl-[protein] + ADP + H(+). The catalysed reaction is [DNA-directed RNA polymerase] + ATP = phospho-[DNA-directed RNA polymerase] + ADP + H(+). Phosphorylation at Thr-14 or Tyr-15 inactivates the enzyme, while phosphorylation at Thr-161 activates it. Plays a key role in the control of the eukaryotic cell cycle by modulating the centrosome cycle as well as mitotic onset; promotes G2-M transition via association with multiple interphase cyclins. During G2 and early mitosis, CDC25A/B/C-mediated dephosphorylation activates CDK1/cyclin complexes which phosphorylate several substrates that trigger at least centrosome separation, Golgi dynamics, nuclear envelope breakdown and chromosome condensation. Once chromosomes are condensed and aligned at the metaphase plate, CDK1 activity is switched off by WEE1- and PKMYT1-mediated phosphorylation to allow sister chromatid separation, chromosome decondensation, reformation of the nuclear envelope and cytokinesis. Catalyzes lamin (LMNA, LMNB1 and LMNB2) phosphorylation at the onset of mitosis, promoting nuclear envelope breakdown. In Xenopus laevis (African clawed frog), this protein is Cyclin-dependent kinase 1-B (cdk1-b).